The following is a 194-amino-acid chain: MLQKVKDIYSESIQIQIAASSMLSENITNATQMVMQCLLGGNKVIACGVSRSYANAQFLVSNLLNRYDLVRPSFPSVLLSLESAVGSSLVFEQPPEELYCHQFNASAKSGDLLIAFAPLGTEKIVLNIISHAVSKEVNVIVLTGSNNDAIQGILADKDLEISIPATKESRILENHLFVINALCELVDQTLFPSA.

The SIS domain maps to 34–192 (VMQCLLGGNK…CELVDQTLFP (159 aa)).

Belongs to the SIS family. DiaA subfamily.

This is an uncharacterized protein from Haemophilus influenzae (strain ATCC 51907 / DSM 11121 / KW20 / Rd).